The sequence spans 352 residues: E3 ubiquitin-protein ligase RNF146 (352 aa).

The segment at 36-74 (CAICLQTCVHPVSLPCKHVFCYLCVKGASWLGKRCALCR) adopts an RING-type zinc-finger fold. Glycyl lysine isopeptide (Lys-Gly) (interchain with G-Cter in ubiquitin) cross-links involve residues Lys-84 and Lys-94. A WWE domain is found at 91–167 (EELKAASRGN…EHGRRRKIKR (77 aa)). Residues Tyr-107, Arg-110, and Trp-114 each contribute to the a glycoprotein site. Residue Lys-130 forms a Glycyl lysine isopeptide (Lys-Gly) (interchain with G-Cter in ubiquitin) linkage. Positions 144, 153, 163, and 175 each coordinate a glycoprotein. Lys-175 participates in a covalent cross-link: Glycyl lysine isopeptide (Lys-Gly) (interchain with G-Cter in ubiquitin). 3 disordered regions span residues 195-242 (SSAD…AGAS), 259-293 (ERSH…ASSD), and 317-352 (NQTV…VTEV). The segment covering 197–210 (ADGADSGSAHTGAS) has biased composition (low complexity). Residues 215–233 (VPSSTRPLTSVDGQLTSPV) show a composition bias toward polar residues. Positions 282–293 (STEETESDASSD) are enriched in acidic residues. Phosphoserine occurs at positions 288 and 292.

As to quaternary structure, can form homooligomers. Interacts with PARsylated AXIN1, AXIN2, BLZF1, CASC3, H1-2, IPO7, LIG3, NCL, PARP1, XRCC1, XRCC5 and XRCC6. Interacts with DDB1, DHX15, IQGAP1, LRPPRC, PARP2, PRKDC, RUVBL2, TNKS1 and TNKS2. Binding often leads to interactor ubiquitination, in the presence of the appropriate E1 and E2 enzymes, and proteasomal degradation. Post-translationally, ubiquitinated; autoubiquitinated. Autoubiquitination is enhanced upon poly(ADP-ribose)-binding.

Its subcellular location is the cytoplasm. It localises to the cytosol. The protein localises to the nucleus. It catalyses the reaction S-ubiquitinyl-[E2 ubiquitin-conjugating enzyme]-L-cysteine + [acceptor protein]-L-lysine = [E2 ubiquitin-conjugating enzyme]-L-cysteine + N(6)-ubiquitinyl-[acceptor protein]-L-lysine.. It functions in the pathway protein modification; protein ubiquitination. E3 ubiquitin-protein ligase that specifically binds poly-ADP-ribosylated (PARsylated) proteins and mediates their ubiquitination and subsequent degradation. May regulate many important biological processes, such as cell survival and DNA damage response. Acts as an activator of the Wnt signaling pathway by mediating the ubiquitination of PARsylated AXIN1 and AXIN2, 2 key components of the beta-catenin destruction complex. Acts in cooperation with tankyrase proteins (TNKS and TNKS2), which mediate PARsylation of target proteins AXIN1, AXIN2, BLZF1, CASC3, TNKS and TNKS2. Recognizes and binds tankyrase-dependent PARsylated proteins via its WWE domain and mediates their ubiquitination, leading to their degradation. Different ubiquitin linkage types have been observed: TNKS2 undergoes ubiquitination at 'Lys-48' and 'Lys-63', while AXIN1 is only ubiquitinated at 'Lys-48'. May regulate TNKS and TNKS2 subcellular location, preventing aggregation at a centrosomal location. Neuroprotective protein. Protects the brain against N-methyl-D-aspartate (NMDA) receptor-mediated glutamate excitotoxicity and ischemia, by interfering with PAR-induced cell death, called parthanatos. Prevents nuclear translocation of AIFM1 in a PAR-binding dependent manner. Does not affect PARP1 activation. Protects against cell death induced by DNA damaging agents, such as N-methyl-N-nitro-N-nitrosoguanidine (MNNG) and rescues cells from G1 arrest. Promotes cell survival after gamma-irradiation. Facilitates DNA repair. The protein is E3 ubiquitin-protein ligase RNF146 (Rnf146) of Rattus norvegicus (Rat).